The chain runs to 284 residues: D-tagatose-1,6-bisphosphate aldolase subunit GatY (284 aa).

Asp-82 (proton donor) is an active-site residue. Zn(2+) is bound by residues His-83 and His-180. Gly-181 is a dihydroxyacetone phosphate binding site. His-208 is a binding site for Zn(2+). Dihydroxyacetone phosphate-binding positions include 209 to 211 and 230 to 233; these read GAS and NVAT.

The protein belongs to the class II fructose-bisphosphate aldolase family. TagBP aldolase GatY subfamily. Forms a complex with GatZ. The cofactor is Zn(2+).

The catalysed reaction is D-tagatofuranose 1,6-bisphosphate = D-glyceraldehyde 3-phosphate + dihydroxyacetone phosphate. It functions in the pathway carbohydrate metabolism; D-tagatose 6-phosphate degradation; D-glyceraldehyde 3-phosphate and glycerone phosphate from D-tagatose 6-phosphate: step 2/2. Functionally, catalytic subunit of the tagatose-1,6-bisphosphate aldolase GatYZ, which catalyzes the reversible aldol condensation of dihydroxyacetone phosphate (DHAP or glycerone-phosphate) with glyceraldehyde 3-phosphate (G3P) to produce tagatose 1,6-bisphosphate (TBP). Requires GatZ subunit for full activity and stability. Is involved in the catabolism of galactitol. In Escherichia coli (strain 55989 / EAEC), this protein is D-tagatose-1,6-bisphosphate aldolase subunit GatY.